Reading from the N-terminus, the 173-residue chain is NADH-quinone oxidoreductase subunit B 2 (173 aa).

The [4Fe-4S] cluster site is built by Cys42, Cys43, Cys107, and Cys137.

It belongs to the complex I 20 kDa subunit family. In terms of assembly, NDH-1 is composed of 14 different subunits. Subunits NuoB, C, D, E, F, and G constitute the peripheral sector of the complex. [4Fe-4S] cluster is required as a cofactor.

It is found in the cell inner membrane. It carries out the reaction a quinone + NADH + 5 H(+)(in) = a quinol + NAD(+) + 4 H(+)(out). NDH-1 shuttles electrons from NADH, via FMN and iron-sulfur (Fe-S) centers, to quinones in the respiratory chain. Couples the redox reaction to proton translocation (for every two electrons transferred, four hydrogen ions are translocated across the cytoplasmic membrane), and thus conserves the redox energy in a proton gradient. The sequence is that of NADH-quinone oxidoreductase subunit B 2 from Anaeromyxobacter dehalogenans (strain 2CP-C).